Consider the following 115-residue polypeptide: Integration host factor subunit alpha (115 aa).

The protein belongs to the bacterial histone-like protein family. In terms of assembly, heterodimer of an alpha and a beta chain.

This protein is one of the two subunits of integration host factor, a specific DNA-binding protein that functions in genetic recombination as well as in transcriptional and translational control. In Burkholderia pseudomallei (strain K96243), this protein is Integration host factor subunit alpha.